Here is a 143-residue protein sequence, read N- to C-terminus: Large ribosomal subunit protein uL13 (143 aa).

It belongs to the universal ribosomal protein uL13 family. Part of the 50S ribosomal subunit.

Its function is as follows. This protein is one of the early assembly proteins of the 50S ribosomal subunit, although it is not seen to bind rRNA by itself. It is important during the early stages of 50S assembly. The protein is Large ribosomal subunit protein uL13 of Coprothermobacter proteolyticus (strain ATCC 35245 / DSM 5265 / OCM 4 / BT).